Here is a 637-residue protein sequence, read N- to C-terminus: Multicopper oxidase LPR1 homolog 5 (637 aa).

The first 21 residues, 1–21 (MSPRIQQLAAVLLAAVVVVAA), serve as a signal peptide directing secretion. N-linked (GlcNAc...) asparagine glycosylation occurs at N100. Positions 209 and 211 each coordinate Cu cation. N-linked (GlcNAc...) asparagine glycosylation occurs at N234. Residues H257 and H259 each contribute to the Cu cation site. Residues N308, N349, N357, N425, N482, and N516 are each glycosylated (N-linked (GlcNAc...) asparagine). The Plastocyanin-like domain occupies 334–406 (PYLSVQRRRY…IVDFSRLPAA (73 aa)). Residues H522, H525, and H527 each contribute to the Cu cation site. N553 carries N-linked (GlcNAc...) asparagine glycosylation. Residues H618, C619, H620, H624, and M629 each coordinate Cu cation.

Belongs to the multicopper oxidase family. Cu cation is required as a cofactor. Highly expressed in roots and basal stems.

The protein resides in the endoplasmic reticulum membrane. Multicopper oxidase that may play a role in the maintenance of inorganic phosphate homeostasis. The polypeptide is Multicopper oxidase LPR1 homolog 5 (Oryza sativa subsp. japonica (Rice)).